A 469-amino-acid polypeptide reads, in one-letter code: Probable ribonuclease FAU-1 (469 aa).

This sequence belongs to the FAU-1 family.

Functionally, probable RNase involved in rRNA stability through maturation and/or degradation of precursor rRNAs. Binds to RNA in loop regions with AU-rich sequences. The sequence is that of Probable ribonuclease FAU-1 from Ignicoccus hospitalis (strain KIN4/I / DSM 18386 / JCM 14125).